Here is a 272-residue protein sequence, read N- to C-terminus: Putative bark agglutinin LECRPA3 (272 aa).

A signal peptide spans 1-29; sequence PFNPETVYALLAMLISFFVLLASARKENS. 3 N-linked (GlcNAc...) asparagine glycosylation sites follow: Asn-36, Asn-39, and Asn-65. 2 residues coordinate Mn(2+): Glu-150 and Asp-152. Ca(2+)-binding residues include Asp-152, Tyr-154, Asn-156, and Asp-159. Residues Asp-159 and His-164 each contribute to the Mn(2+) site.

This sequence belongs to the leguminous lectin family. As to quaternary structure, homotetramer. Weak expression in bark. The lectin accumulates in the inner bark in autumn.

Functionally, bark lectins are storage proteins that probably maintain stocks of nitrogen during dormant period. Self-aggregatable molecules that can bind their own carbohydrate side chains. They could also play a role in the plant's defense against phytophagous invertebrates or herbivorous higher animals. In Robinia pseudoacacia (Black locust), this protein is Putative bark agglutinin LECRPA3.